Consider the following 1260-residue polypeptide: Kinesin-like protein KIN-14E (1260 aa).

The MyTH4 domain occupies 115–274 (FQKDPIPTSL…PGREEIEALL (160 aa)). Positions 279 to 593 (LTTIVFFLDE…HINDVMLRRY (315 aa)) constitute an FERM domain. Coiled-coil stretches lie at residues 615–676 (QNFE…LLEV) and 753–853 (SKRL…TAAI). The Kinesin motor domain maps to 888–1209 (KIRVYCRIRP…LLYASRVRTI (322 aa)). An ATP-binding site is contributed by 972–977 (GSGKTF). A calmodulin-binding region spans residues 1217-1239 (ISSKEMVRLKKLVAYWKEQAGKK). Positions 1221–1260 (EMVRLKKLVAYWKEQAGKKGEEEDLVDIEEDRTRKDEADS) are homodimerization domain. The interval 1236–1260 (AGKKGEEEDLVDIEEDRTRKDEADS) is disordered. Residues 1251-1260 (DRTRKDEADS) are compositionally biased toward basic and acidic residues.

The protein belongs to the TRAFAC class myosin-kinesin ATPase superfamily. Kinesin family. KIN-14 subfamily. In terms of assembly, homodimer (via C-terminus). Binds microtubules via its N-terminus containing the MyTH4 domain and binds F-actin via its FERM domain. Interacts with KIPK1. Interacts with KIPK2. Interacts with AN. Interacts with AIR9. Interacts (via C-terminus) with KIC, CAM2, CAM4 and CAM6. KIC and calmodulin show competitive binding to KCBP. Binding to calmodulin inhibits microtubule binding activity. Binding to KIC inhibits microtubule binding activity and microtubule-stimulated ATPase activity. As to expression, widely expressed with the highest levels in flowers. Strongly expressed in the root tip. Highly detected in the branch apex of the trichome.

It is found in the cytoplasm. It localises to the cell cortex. The protein localises to the cytoskeleton. Its subcellular location is the spindle. The protein resides in the phragmoplast. In terms of biological role, minus-end microtubule-dependent motor protein involved in the regulation of cell division and trichome morphogenesis through microtubules bundling. Possesses basal and microtubule-stimulated ATPase activities. Acts as a hub that brings together microtubules and actin filaments to modulate the cytoskeleton during trichome formation and morphogenesis. Could be involved in the negative regulation of root growth. This chain is Kinesin-like protein KIN-14E, found in Arabidopsis thaliana (Mouse-ear cress).